The primary structure comprises 139 residues: NADH-quinone oxidoreductase subunit A (139 aa).

Helical transmembrane passes span 11 to 31 (LWPL…MLAL), 70 to 90 (LIAI…AWAI), and 97 to 117 (WPGY…LVYL).

It belongs to the complex I subunit 3 family. NDH-1 is composed of 14 different subunits. Subunits NuoA, H, J, K, L, M, N constitute the membrane sector of the complex.

It is found in the cell inner membrane. The catalysed reaction is a quinone + NADH + 5 H(+)(in) = a quinol + NAD(+) + 4 H(+)(out). NDH-1 shuttles electrons from NADH, via FMN and iron-sulfur (Fe-S) centers, to quinones in the respiratory chain. The immediate electron acceptor for the enzyme in this species is believed to be ubiquinone. Couples the redox reaction to proton translocation (for every two electrons transferred, four hydrogen ions are translocated across the cytoplasmic membrane), and thus conserves the redox energy in a proton gradient. This chain is NADH-quinone oxidoreductase subunit A, found in Methylococcus capsulatus (strain ATCC 33009 / NCIMB 11132 / Bath).